The chain runs to 251 residues: Auxin-responsive protein IAA29 (251 aa).

An EAR-like (transcriptional repression) motif is present at residues 3 to 7 (LDLGL). Residues 159–246 (SMYVKVKMDG…SIIRDRPCAY (88 aa)) enclose the PB1 domain.

Belongs to the Aux/IAA family. As to quaternary structure, homodimers and heterodimers.

It localises to the nucleus. Aux/IAA proteins are short-lived transcriptional factors that function as repressors of early auxin response genes at low auxin concentrations. Repression is thought to result from the interaction with auxin response factors (ARFs), proteins that bind to the auxin-responsive promoter element (AuxRE). Formation of heterodimers with ARF proteins may alter their ability to modulate early auxin response genes expression. The sequence is that of Auxin-responsive protein IAA29 (IAA29) from Arabidopsis thaliana (Mouse-ear cress).